The sequence spans 589 residues: Probable 9-cis-epoxycarotenoid dioxygenase NCED5, chloroplastic (589 aa).

Residues 1-45 (MACSYILTPNPTKLNLSFAPSDLDAPSPSSSVSFTNTKPRRRKLS) constitute a chloroplast transit peptide. Positions 21–34 (SDLDAPSPSSSVSF) are enriched in low complexity. The disordered stretch occupies residues 21–51 (SDLDAPSPSSSVSFTNTKPRRRKLSANSVSD). Fe cation contacts are provided by histidine 287, histidine 336, histidine 401, and histidine 576.

The protein belongs to the carotenoid oxygenase family. Interacts in vitro with VAR3. The cofactor is Fe(2+). In terms of tissue distribution, detected only in seeds.

It is found in the plastid. The protein resides in the chloroplast thylakoid membrane. It catalyses the reaction a 9-cis-epoxycarotenoid + O2 = a 12'-apo-carotenal + 2-cis,4-trans-xanthoxin. The enzyme catalyses 9-cis-violaxanthin + O2 = (3S,5R,6S)-5,6-epoxy-3-hydroxy-5,6-dihydro-12'-apo-beta-caroten-12'-al + 2-cis,4-trans-xanthoxin. It carries out the reaction 9'-cis-neoxanthin + O2 = (3S,5R,6R)-3,5-dihydroxy-6,7-didehydro-5,6-dihydro-12'-apo-beta-caroten-12'-al + 2-cis,4-trans-xanthoxin. Functionally, has a 11,12(11',12') 9-cis epoxycarotenoid cleavage activity. Catalyzes the first step of abscisic-acid biosynthesis from carotenoids. The polypeptide is Probable 9-cis-epoxycarotenoid dioxygenase NCED5, chloroplastic (NCED5) (Arabidopsis thaliana (Mouse-ear cress)).